Here is an 85-residue protein sequence, read N- to C-terminus: Small ribosomal subunit protein bS16 (85 aa).

This sequence belongs to the bacterial ribosomal protein bS16 family.

The chain is Small ribosomal subunit protein bS16 from Acinetobacter baylyi (strain ATCC 33305 / BD413 / ADP1).